We begin with the raw amino-acid sequence, 341 residues long: UDP-N-acetylenolpyruvoylglucosamine reductase (341 aa).

The FAD-binding PCMH-type domain maps to 15–185 (VEQSCLSLIE…TAVGLRLPKA (171 aa)). Arg161 is a catalytic residue. Residue Ser231 is the Proton donor of the active site. Residue Glu327 is part of the active site.

The protein belongs to the MurB family. Requires FAD as cofactor.

It is found in the cytoplasm. The enzyme catalyses UDP-N-acetyl-alpha-D-muramate + NADP(+) = UDP-N-acetyl-3-O-(1-carboxyvinyl)-alpha-D-glucosamine + NADPH + H(+). It functions in the pathway cell wall biogenesis; peptidoglycan biosynthesis. Cell wall formation. This Shewanella sp. (strain ANA-3) protein is UDP-N-acetylenolpyruvoylglucosamine reductase.